The following is a 984-amino-acid chain: Putative formate dehydrogenase SAUSA300_2258 (984 aa).

One can recognise a 2Fe-2S ferredoxin-type domain in the interval 3–79 (EHLVVTLDGK…PMTVNTVNND (77 aa)). Positions 37, 48, 51, and 63 each coordinate [2Fe-2S] cluster. In terms of domain architecture, 4Fe-4S His(Cys)3-ligated-type spans 79 to 119 (DVKDAQKEALDRILEKHMLYCTVCDYNNGDCEIHNTMDAWG). Residues histidine 95, cysteine 99, cysteine 102, cysteine 109, cysteine 147, cysteine 150, cysteine 153, cysteine 157, cysteine 190, cysteine 193, cysteine 196, cysteine 200, cysteine 264, cysteine 267, cysteine 271, and cysteine 299 each contribute to the [4Fe-4S] cluster site. 4Fe-4S ferredoxin-type domains follow at residues 138-165 (PFYR…VNET) and 181-211 (NDVP…VNME). The formate dehydrogenase stretch occupies residues 252–984 (MRKERIKKTK…YVFPGNQVDK (733 aa)). The 57-residue stretch at 257 to 313 (IKKTKTVCTYCGVGCSFEVWTKDREILKVQPSHDSPANKIATCVKGKFSWGHINSDQ) folds into the 4Fe-4S Mo/W bis-MGD-type domain.

In the C-terminal section; belongs to the prokaryotic molybdopterin-containing oxidoreductase family. [2Fe-2S] cluster serves as cofactor. [4Fe-4S] cluster is required as a cofactor. Requires Mo-bis(molybdopterin guanine dinucleotide) as cofactor.

It catalyses the reaction formate + NAD(+) = CO2 + NADH. This Staphylococcus aureus (strain USA300) protein is Putative formate dehydrogenase SAUSA300_2258.